The sequence spans 825 residues: Leucine-rich repeat and guanylate kinase domain-containing protein (825 aa).

The tract at residues 73 to 96 (DSDGDEDQGEGEAGSEESSESEML) is disordered. 9 LRR repeats span residues 129-149 (YLNL…CGYV), 150-171 (HLQK…SCMP), 172-193 (YLLE…KPPK), 194-215 (NLKK…SAYH), 216-237 (ALTK…EMCN), 238-259 (NLIH…NKLP), 260-280 (IKIL…EDLK), 281-302 (ALQN…ENHD), and 303-324 (LLEV…EYIK). An LRRCT domain is found at 337 to 375 (NPIQEKSEYWFFVIFMLLRLTELDQKKIKVEEKVSAVNK). The Guanylate kinase-like domain occupies 414-597 (YPMLILAGPE…AYQKLSQLIR (184 aa)). 421 to 428 (GPEACGKR) provides a ligand contact to ATP. Residues 760-825 (PEGSISSHLG…TLPPIPQGRR (66 aa)) are disordered. A compositionally biased stretch (polar residues) spans 763-774 (SISSHLGSGASD). Over residues 816–825 (TLPPIPQGRR) the composition is skewed to pro residues.

In terms of assembly, interacts (via guanylate kinase-like domain) with RIMBP3 (via coiled-coil region). Interacts (via guanylate kinase-like domain) with HOOK2. Interacts (via LRRCT domain) with KLC3. Interacts with HOOK1 and HOOK3.

The protein resides in the cytoplasmic vesicle. Its subcellular location is the secretory vesicle. The protein localises to the acrosome. It is found in the cytoplasm. It localises to the cytoskeleton. The protein resides in the cilium basal body. In terms of biological role, involved in multiple aspects of sperm assembly including acrosome attachment, shaping of the sperm head and in the early aspects of axoneme development. Not essential for primary cilium biogenesis. The protein is Leucine-rich repeat and guanylate kinase domain-containing protein (LRGUK) of Homo sapiens (Human).